Consider the following 301-residue polypeptide: Rhodopsin (301 aa).

Over Leu1–Met18 the chain is Extracellular. A helical membrane pass occupies residues Tyr19–Val43. At Phe44–Asn55 the chain is on the cytoplasmic side. Residues Leu56–Val78 form a helical membrane-spanning segment. Topologically, residues Thr79–Cys92 are extracellular. The cysteines at positions 92 and 169 are disulfide-linked. The helical transmembrane segment at Gln93–Phe115 threads the bilayer. The 'Ionic lock' involved in activated form stabilization motif lies at Asp116–Tyr118. The Cytoplasmic portion of the chain corresponds to Asp116–Lys134. Residues Ala135–Phe155 form a helical membrane-spanning segment. Residues Gly156–Ser182 are Extracellular-facing. Residue Asn165 is glycosylated (N-linked (GlcNAc...) asparagine). The helical transmembrane segment at Tyr183 to Val204 threads the bilayer. At Phe205–Lys245 the chain is on the cytoplasmic side. The helical transmembrane segment at Ile246 to Val267 threads the bilayer. Residues Gly268–Val278 lie on the Extracellular side of the membrane. Residues Tyr279–Ile300 form a helical membrane-spanning segment. Lys288 carries the N6-(retinylidene)lysine modification.

This sequence belongs to the G-protein coupled receptor 1 family. Opsin subfamily. In terms of assembly, homodimer. Interacts with GNAQ. In terms of processing, contains one covalently linked retinal chromophore.

The protein resides in the cell projection. The protein localises to the rhabdomere membrane. Functionally, photoreceptor required for image-forming vision at low light intensity. Can use both retinal and 3-dehydroretinal as visual pigment. Light-induced isomerization of 11-cis to all-trans retinal triggers a conformational change that activates signaling via G-proteins. Signaling via GNAQ probably mediates the activation of phospholipase C. This Procambarus seminolae (Crayfish) protein is Rhodopsin (RHO).